The primary structure comprises 161 residues: Probable metalloprotease HVO_1016 (161 aa).

Positions 10 to 131 (VGIAADALDF…WEAFDQSGEV (122 aa)) constitute an MPN domain. Glu-31 (proton donor/acceptor) is an active-site residue. Residues His-87, His-89, and Asp-100 each coordinate Zn(2+). The short motif at 87 to 100 (HSHPNGVLRPSDAD) is the JAMM motif element.

Belongs to the peptidase M67B family. In terms of assembly, monomer and homodimer. Zn(2+) is required as a cofactor.

Probable metalloprotease. Does not hydrolyze SAMP1- and SAMP2-protein conjugates, diglycine-AMC, Ub-AMC, hemoglobin, cytochrome c, carbonic anhydrase, creatinine phosphokinase, beta-amylase and bovine serum albumin. The polypeptide is Probable metalloprotease HVO_1016 (Haloferax volcanii (strain ATCC 29605 / DSM 3757 / JCM 8879 / NBRC 14742 / NCIMB 2012 / VKM B-1768 / DS2) (Halobacterium volcanii)).